A 220-amino-acid chain; its full sequence is Putative cobalt transport protein CbiM (220 aa).

A run of 5 helical transmembrane segments spans residues 6–26 (GFLP…IVVY), 43–63 (ALVA…FPSV), 74–94 (GLLV…IVLL), 98–118 (LLLA…MGII), and 182–202 (IFTL…AAVI).

This sequence belongs to the CbiM family. As to quaternary structure, forms an energy-coupling factor (ECF) transporter complex composed of an ATP-binding protein (A component, CbiO), a transmembrane protein (T component, CbiQ) and 2 possible substrate-capture proteins (S components, CbiM and CbiN) of unknown stoichimetry.

It localises to the cell membrane. It functions in the pathway cofactor biosynthesis; adenosylcobalamin biosynthesis. Its function is as follows. Part of the energy-coupling factor (ECF) transporter complex CbiMNOQ involved in cobalt import. The polypeptide is Putative cobalt transport protein CbiM (Haloquadratum walsbyi (strain DSM 16790 / HBSQ001)).